Consider the following 125-residue polypeptide: Large ribosomal subunit protein bL20 (125 aa).

Belongs to the bacterial ribosomal protein bL20 family.

In terms of biological role, binds directly to 23S ribosomal RNA and is necessary for the in vitro assembly process of the 50S ribosomal subunit. It is not involved in the protein synthesizing functions of that subunit. This Zymomonas mobilis subsp. mobilis (strain ATCC 31821 / ZM4 / CP4) protein is Large ribosomal subunit protein bL20.